The following is a 72-amino-acid chain: UPF0154 protein BLi02038/BL02936 (72 aa).

A helical transmembrane segment spans residues 4–24; that stretch reads WVVILVGVLALLAGVALGFFI.

It belongs to the UPF0154 family.

It localises to the cell membrane. This chain is UPF0154 protein BLi02038/BL02936, found in Bacillus licheniformis (strain ATCC 14580 / DSM 13 / JCM 2505 / CCUG 7422 / NBRC 12200 / NCIMB 9375 / NCTC 10341 / NRRL NRS-1264 / Gibson 46).